Reading from the N-terminus, the 328-residue chain is Fructokinase-2 (328 aa).

Belongs to the carbohydrate kinase PfkB family.

It catalyses the reaction D-fructose + ATP = D-fructose 6-phosphate + ADP + H(+). It functions in the pathway glycan biosynthesis; starch biosynthesis. May play an important role in maintaining the flux of carbon towards starch formation. The sequence is that of Fructokinase-2 (FRK2) from Solanum lycopersicum (Tomato).